The following is a 665-amino-acid chain: Succinate dehydrogenase [ubiquinone] flavoprotein subunit A, mitochondrial (665 aa).

Residues 1 to 45 (MALLKVAPSRLLSRALQLASRVQNCTPTVTTARRNFHFTVYGRKD) constitute a mitochondrion transit peptide. 5 residues coordinate FAD: alanine 72, alanine 75, threonine 94, lysine 95, and serine 101. Histidine 102 carries the tele-8alpha-FAD histidine modification. FAD is bound by residues threonine 103, glycine 108, alanine 224, and aspartate 278. Histidine 299, arginine 343, and histidine 410 together coordinate oxaloacetate. Catalysis depends on arginine 343, which acts as the Proton acceptor. Glutamate 443 contacts FAD. Positions 454 and 457 each coordinate oxaloacetate. 2 residues coordinate FAD: serine 459 and leucine 460.

This sequence belongs to the FAD-dependent oxidoreductase 2 family. FRD/SDH subfamily. Component of complex II composed of four subunits: a flavoprotein (FP), an iron-sulfur protein (IP), and a cytochrome b composed of a large and a small subunit. FAD is required as a cofactor.

The protein resides in the mitochondrion inner membrane. The enzyme catalyses a ubiquinone + succinate = a ubiquinol + fumarate. It carries out the reaction (R)-malate + a quinone = enol-oxaloacetate + a quinol. The catalysed reaction is (S)-malate + a quinone = enol-oxaloacetate + a quinol. It participates in carbohydrate metabolism; tricarboxylic acid cycle; fumarate from succinate (eukaryal route): step 1/1. Enol-oxaloacetate inhibits the succinate dehydrogenase activity. In terms of biological role, flavoprotein (FP) subunit of succinate dehydrogenase (SDH) that is involved in complex II of the mitochondrial electron transport chain and is responsible for transferring electrons from succinate to ubiquinone (coenzyme Q). SDH also oxidizes malate to the non-canonical enol form of oxaloacetate, enol-oxaloacetate. Enol-oxaloacetate, which is a potent inhibitor of the succinate dehydrogenase activity, is further isomerized into keto-oxaloacetate. The protein is Succinate dehydrogenase [ubiquinone] flavoprotein subunit A, mitochondrial (sdha-a) of Xenopus laevis (African clawed frog).